A 134-amino-acid chain; its full sequence is Complexin-1 (134 aa).

A disordered region spans residues 1–112; the sequence is MEFVMKQALG…PGCGDAAEEE (112 aa). A compositionally biased stretch (basic and acidic residues) spans 15–81; sequence DMGKMLGGDE…IKKKEEREAE (67 aa). Residues 29-69 are a coiled coil; that stretch reads DAAKKEEERQEALRQEEEERKAKYAKMEAEREAVRQGIRDK. The tract at residues 48–70 is interaction with the SNARE complex; the sequence is RKAKYAKMEAEREAVRQGIRDKY.

Belongs to the complexin/synaphin family. As to quaternary structure, binds to the SNARE core complex containing SNAP25, VAMP2 and STX1A.

The protein localises to the cytoplasm. Its subcellular location is the cytosol. It is found in the perikaryon. The protein resides in the presynapse. Positively regulates a late step in synaptic vesicle exocytosis. Organizes the SNAREs into a cross-linked zigzag topology that, when interposed between the vesicle and plasma membranes, is incompatible with fusion, thereby preventing SNAREs from releasing neurotransmitters until an action potential arrives at the synapse. Also involved in glucose-induced secretion of insulin by pancreatic beta-cells. The protein is Complexin-1 (CPLX1) of Bos taurus (Bovine).